A 153-amino-acid polypeptide reads, in one-letter code: Protein SprT-like (153 aa).

A SprT-like domain is found at 6–148 (LQQLTEQLSL…CGKCGGKIKE (143 aa)). Histidine 67 is a binding site for Zn(2+). Glutamate 68 is an active-site residue. Histidine 71 contributes to the Zn(2+) binding site.

It belongs to the SprT family. Zn(2+) is required as a cofactor.

It localises to the cytoplasm. This Bacillus licheniformis (strain ATCC 14580 / DSM 13 / JCM 2505 / CCUG 7422 / NBRC 12200 / NCIMB 9375 / NCTC 10341 / NRRL NRS-1264 / Gibson 46) protein is Protein SprT-like.